The following is a 60-amino-acid chain: Ribosome-inactivating protein dianthin-32 (60 aa).

The protein belongs to the ribosome-inactivating protein family. Type 1 RIP subfamily.

The enzyme catalyses Endohydrolysis of the N-glycosidic bond at one specific adenosine on the 28S rRNA.. In terms of biological role, single-chain ribosome-inactivating protein. The protein is Ribosome-inactivating protein dianthin-32 of Dianthus caryophyllus (Carnation).